Here is a 288-residue protein sequence, read N- to C-terminus: Ion-translocating oxidoreductase complex subunit D (288 aa).

The next 9 helical transmembrane spans lie at 26–46 (IVALLPISAAAVYFFGFAALG), 47–67 (NIIASILGAVGIEFVIQKAFN), 80–100 (LGLLLALICPPTLPAWMIFIG), 101–121 (GAFAVGVGKHAFGGIGSYTFH), 126–146 (AWVFLSLAWAQDMLPGTIPIL), 159–179 (GFLTDVSPILVLLAGVILILV), 200–220 (VLGDPLAYVVSGTFLLGVFFI), 235–255 (IVYGILCGFLTVIYGYFSGNY), and 256–276 (VWGTLYALLLSNAVAPFIELK).

This sequence belongs to the NqrB/RnfD family. The Rnf complex is probably composed of eight subunits, including RnfA, RnfB, RnfC, RnfD, RnfE and RnfG. Requires FMN as cofactor.

The protein resides in the cell membrane. In terms of biological role, part of a membrane-bound complex that couples electron transfer with translocation of ions across the membrane. Catalyzes Na(+) transport, most probably coupled to electron transfer from reduced ferredoxin to methanophenazine and heterodisulfide reductase. Involved in heterodisulfide reduction during methanogenesis from acetate. The protein is Ion-translocating oxidoreductase complex subunit D of Methanosarcina acetivorans (strain ATCC 35395 / DSM 2834 / JCM 12185 / C2A).